The chain runs to 935 residues: Isoleucine--tRNA ligase (935 aa).

Residues 58 to 68 carry the 'HIGH' region motif; the sequence is PYANGSIHVGH. Glu558 is an L-isoleucyl-5'-AMP binding site. A 'KMSKS' region motif is present at residues 599 to 603; sequence KMSKS. Lys602 is an ATP binding site. Residues Cys897, Cys900, Cys917, and Cys920 each coordinate Zn(2+).

It belongs to the class-I aminoacyl-tRNA synthetase family. IleS type 1 subfamily. Monomer. Zn(2+) is required as a cofactor.

The protein localises to the cytoplasm. It catalyses the reaction tRNA(Ile) + L-isoleucine + ATP = L-isoleucyl-tRNA(Ile) + AMP + diphosphate. Catalyzes the attachment of isoleucine to tRNA(Ile). As IleRS can inadvertently accommodate and process structurally similar amino acids such as valine, to avoid such errors it has two additional distinct tRNA(Ile)-dependent editing activities. One activity is designated as 'pretransfer' editing and involves the hydrolysis of activated Val-AMP. The other activity is designated 'posttransfer' editing and involves deacylation of mischarged Val-tRNA(Ile). This chain is Isoleucine--tRNA ligase, found in Francisella tularensis subsp. holarctica (strain OSU18).